The chain runs to 564 residues: MVFVISVILAIIVILTIGLILRKRIYDKVDHQEKWKMDIMARDVAQQISKIKSLNLSGETQEKFELWKGRWEHIITKELPDIEDHLFDAEDAADKFRMKRANNILTEGDQKLQNIEVKIEEILEELDELLSSEKTSREEVAQIVPTIKLLRKTLSQSRYQYGKAEKFFDKKLDEFDTQLATYEDNVESGDYLEANRLIQVLKEEIAEFEIKMEQFPEILRRCKQDLPSQLEQVLAGLQEMKNDGYRVKHFGFDKEIITYQDQLKNLQQQIEQGDITDVSTKLDEIEERITEMYESLEGEAIAKNYLEQRIPEYEKSISEIAATYDDTKLEVEELQKAYFVENNDMERFFTIGKTISTLREQLKELHKEMDDDQKSHSDLQNIVEDGFDKIEQLEEQHEEFKKSIENLRKDEMEAREKLIEMRRQLYELNRKIKKSNIPGVPGFIWTRFETASAKNSQVVDVLEDYPLDIAKVQHALSEAKQAVDQTHEQIDIMLDQAYLTEQVIQYANRYRSQQPDLNGKLKEAERLFRNYEYELSLEHAAKAIEEIEPGALKRIEENQLTLNR.

Topologically, residues M1–V2 are extracellular. A helical transmembrane segment spans residues F3–L21. The Cytoplasmic portion of the chain corresponds to R22–R564. Coiled coils occupy residues A101–V140, F168–F215, G251–N436, and D468–L537.

It belongs to the EzrA family.

Its subcellular location is the cell membrane. In terms of biological role, negative regulator of FtsZ ring formation; modulates the frequency and position of FtsZ ring formation. Inhibits FtsZ ring formation at polar sites. Interacts either with FtsZ or with one of its binding partners to promote depolymerization. The polypeptide is Septation ring formation regulator EzrA (Oceanobacillus iheyensis (strain DSM 14371 / CIP 107618 / JCM 11309 / KCTC 3954 / HTE831)).